The chain runs to 251 residues: Flap endonuclease Xni (251 aa).

Aspartate 104 is a Mg(2+) binding site. The 5'-3' exonuclease domain maps to valine 160–leucine 249. The K(+) site is built by leucine 171, alanine 172, proline 180, valine 182, and isoleucine 185. The interaction with DNA stretch occupies residues glycine 184–serine 189.

This sequence belongs to the Xni family. Mg(2+) is required as a cofactor. It depends on K(+) as a cofactor.

In terms of biological role, has flap endonuclease activity. During DNA replication, flap endonucleases cleave the 5'-overhanging flap structure that is generated by displacement synthesis when DNA polymerase encounters the 5'-end of a downstream Okazaki fragment. The sequence is that of Flap endonuclease Xni from Salmonella schwarzengrund (strain CVM19633).